A 367-amino-acid chain; its full sequence is Di-N-acetylchitobiase (367 aa).

Positions 1–23 (MALSDLLELTLLLLLPLLERLSA) are cleaved as a signal peptide. One can recognise a GH18 domain in the interval 24–367 (EDCPCSEASL…EMWGALRPRL (344 aa)). Catalysis depends on glutamate 128, which acts as the Proton donor. 4 N-linked (GlcNAc...) asparagine glycosylation sites follow: asparagine 178, asparagine 213, asparagine 247, and asparagine 284.

It belongs to the glycosyl hydrolase 18 family.

The protein resides in the lysosome. Its function is as follows. Involved in the degradation of asparagine-linked glycoproteins. Hydrolyze of N-acetyl-beta-D-glucosamine (1-4)N-acetylglucosamine chitobiose core from the reducing end of the bond, it requires prior cleavage by glycosylasparaginase. The protein is Di-N-acetylchitobiase (Ctbs) of Rattus norvegicus (Rat).